We begin with the raw amino-acid sequence, 400 residues long: Envelope glycoprotein M (400 aa).

Over 1–16 (MRASKSDRFLMSSWVK) the chain is Intravirion. A helical transmembrane segment spans residues 17-37 (LLFVAVIMYICSAVVPMAATY). The Virion surface portion of the chain corresponds to 38-76 (EGLGFPCYFNNLVNYSALNLTVRNSAKHLTPTLFLEKPE). Residues 77 to 97 (MLVYIFWTFIVDGIAIVYYCL) form a helical membrane-spanning segment. The Intravirion segment spans residues 98 to 113 (AAVAVYRAKHVHATTM). The chain crosses the membrane as a helical span at residues 114–134 (MSMQSWIALLGSHSVLYVAIL). Residues 135-152 (RMWSMQLFIHVLSYKHVL) lie on the Virion surface side of the membrane. Residues 153-173 (MAAFVYCIHFCISFAHIQSLI) traverse the membrane as a helical segment. Topologically, residues 174 to 208 (TCNSAQWEIPLLEQHVPDNTMMESLLTRWKPVCVN) are intravirion. Residues 209-229 (LYLSTTALEMLLFSLSTMMAV) traverse the membrane as a helical segment. At 230–234 (GNSFY) the chain is on the virion surface side. A helical transmembrane segment spans residues 235 to 255 (VLVSDAIFGAVNMFLALTVVW). Residues 256-270 (YINTEFFLVKFMRRQ) are Intravirion-facing. The helical transmembrane segment at 271-291 (VGFYVGVFVGYLILLLPVIRY) threads the bilayer. At 292-300 (ENAFVQANL) the chain is on the virion surface side. A helical transmembrane segment spans residues 301 to 321 (HYIVAINISCIPILCILAIVI). Topologically, residues 322–400 (RVIRSDWGLC…EIDETQMIFI (79 aa)) are intravirion. The disordered stretch occupies residues 348–394 (DRTPTVHQKPPPLPAKTRARAKVKDISTPAPRTQYQSDHESDSEIDE).

Belongs to the herpesviridae glycoprotein M family. Interacts (via N-terminus) with gN (via N-terminus). The gM-gN heterodimer forms the gCII complex. In terms of processing, N-glycosylated.

It localises to the virion membrane. It is found in the host Golgi apparatus. Its subcellular location is the host trans-Golgi network. The protein localises to the host endosome membrane. The protein resides in the host nucleus inner membrane. In terms of biological role, envelope glycoprotein important for virion assembly and egress. Plays a role in the correct incorporation of gH-gL into virion membrane. Directs the glycoprotein N (gN) to the host trans-Golgi network. The protein is Envelope glycoprotein M of Homo sapiens (Human).